Consider the following 210-residue polypeptide: Cell division protein SepF (210 aa).

It belongs to the SepF family. In terms of assembly, homodimer. Interacts with FtsZ.

The protein localises to the cytoplasm. In terms of biological role, cell division protein that is part of the divisome complex and is recruited early to the Z-ring. Probably stimulates Z-ring formation, perhaps through the cross-linking of FtsZ protofilaments. Its function overlaps with FtsA. This Mycobacterium leprae (strain Br4923) protein is Cell division protein SepF.